Here is a 471-residue protein sequence, read N- to C-terminus: 7-hydroxymethyl chlorophyll a reductase, chloroplastic (471 aa).

Residues 1–44 (MARCISFLSTSSSLPCATKPPCCSVSSVLPSSPSSHQCRGRKTS) constitute a chloroplast transit peptide.

This sequence belongs to the FrhB family. FAD is required as a cofactor. It depends on iron-sulfur cluster as a cofactor.

It localises to the plastid. It is found in the chloroplast. It catalyses the reaction chlorophyll a + 2 oxidized [2Fe-2S]-[ferredoxin] + H2O = 7(1)-hydroxychlorophyll a + 2 reduced [2Fe-2S]-[ferredoxin] + 2 H(+). Functionally, probable iron-sulfur flavoprotein that converts 7-hydroxymethyl chlorophyll a to chlorophyll a using ferredoxin as a reducing equivalent. Catalyzes the reduction of a hydroxymethyl group to a methyl group. This chain is 7-hydroxymethyl chlorophyll a reductase, chloroplastic (HCAR), found in Oryza sativa subsp. japonica (Rice).